The primary structure comprises 235 residues: Myelin protein zero-like protein 3 (235 aa).

Positions 1–31 are cleaved as a signal peptide; the sequence is MQQRGAAGSRGCALFPLLGVLFFQGVYIVFS. Residues 32–148 form the Ig-like V-type domain; the sequence is LEIRADAHVR…NIPMTELTVT (117 aa). At 32-158 the chain is on the extracellular side; it reads LEIRADAHVR…ERGFGTMLSS (127 aa). Cys-52 and Cys-128 form a disulfide bridge. Asn-123 carries N-linked (GlcNAc...) asparagine glycosylation. A helical transmembrane segment spans residues 159–179; that stretch reads VALLSILVFVPSAVVVALLLV. Over 180–235 the chain is Cytoplasmic; it reads RMGRKAAGLKKRSRSGYKKSSIEVSDDTDQEEEEACMARLCVRCAECLDSDYEETY.

It belongs to the myelin P0 protein family.

It localises to the membrane. In terms of biological role, mediates homophilic cell-cell adhesion. In Homo sapiens (Human), this protein is Myelin protein zero-like protein 3 (MPZL3).